Reading from the N-terminus, the 1235-residue chain is Cullin-associated NEDD8-dissociated protein 2 (1235 aa).

Residue serine 2 is modified to N-acetylserine. 26 HEAT repeats span residues 2 to 39 (STGA…KDSI), 44 to 81 (DSER…KVKE), 83 to 119 (QVEN…ELPP), 129 to 167 (NVCR…RLGA), 171 to 208 (TFHA…ACST), 210 to 246 (LFVE…SVGR), 254 to 291 (AHLD…KCPK), 326 to 367 (TEDS…SRPD), 371 to 408 (DFHC…HTRP), 431 to 468 (AQVP…VLPG), 516 to 553 (PHLP…TLWP), 564 to 603 (PYVG…HLGD), 607 to 644 (DDLE…LRLD), 647 to 684 (PILA…SQGL), 689 to 726 (PAVR…TQPS), 730 to 769 (EVSG…TRPP), 771 to 812 (VEYS…ALSA), 856 to 893 (GPQR…GNLP), 895 to 930 (FLPF…DNLK), 932 to 965 (YVED…LVFV), 966 to 1002 (NPPY…DQPH), 1006 to 1043 (PLLK…NKPS), 1047 to 1083 (DLLD…DDGL), 1104 to 1140 (LDMC…LCPA), 1156 to 1193 (TCTA…NPEV), and 1203 to 1235 (SAQI…MELS). The interval 314–345 (YDHDSDDEEQMETEDSEFSEQESEDEYSDDDD) is disordered. The span at 317 to 345 (DSDDEEQMETEDSEFSEQESEDEYSDDDD) shows a compositional bias: acidic residues.

This sequence belongs to the CAND family. In terms of assembly, binds TBP, CNOT3 and UBE3C. In terms of processing, ubiquitinated and targeted for proteasomal degradation. In terms of tissue distribution, highly expressed in embryonic limb buds.

It is found in the nucleus. Its function is as follows. Probable assembly factor of SCF (SKP1-CUL1-F-box protein) E3 ubiquitin ligase complexes that promotes the exchange of the substrate-recognition F-box subunit in SCF complexes, thereby playing a key role in the cellular repertoire of SCF complexes. The chain is Cullin-associated NEDD8-dissociated protein 2 (Cand2) from Mus musculus (Mouse).